The sequence spans 544 residues: Glucose starvation modulator protein 1 (544 aa).

The zn(2)-C6 fungal-type DNA-binding region spans 20–48 (CVFCHSKHLQCSNERPCKNCMKRNLGDQC). Residues 65–93 (KKMKSRTNSISSSYRSPSVSESPQNPYTH) are disordered. The segment covering 70–86 (RTNSISSSYRSPSVSES) has biased composition (low complexity). The region spanning 403–475 (SLIDYEKLLL…FKLFKSVAVG (73 aa)) is the PAS domain.

This sequence belongs to the ERT1/acuK family.

The protein resides in the nucleus. Transcription factor which regulates nonfermentable carbon utilization. The sequence is that of Glucose starvation modulator protein 1 (GSM1) from Debaryomyces hansenii (strain ATCC 36239 / CBS 767 / BCRC 21394 / JCM 1990 / NBRC 0083 / IGC 2968) (Yeast).